Consider the following 424-residue polypeptide: CinA-like protein (424 aa).

It belongs to the CinA family.

The sequence is that of CinA-like protein from Prochlorococcus marinus (strain MIT 9312).